The chain runs to 280 residues: Large ribosomal subunit protein uL2 (280 aa).

2 disordered regions span residues 33–55 (LTEGLTKSGGRNNTGRITSRRRG) and 199–266 (DNSN…KASQ). Residues 209–219 (GRMRHKGKRPS) show a composition bias toward basic residues.

This sequence belongs to the universal ribosomal protein uL2 family. Part of the 50S ribosomal subunit. Forms a bridge to the 30S subunit in the 70S ribosome.

In terms of biological role, one of the primary rRNA binding proteins. Required for association of the 30S and 50S subunits to form the 70S ribosome, for tRNA binding and peptide bond formation. It has been suggested to have peptidyltransferase activity; this is somewhat controversial. Makes several contacts with the 16S rRNA in the 70S ribosome. In Ruegeria sp. (strain TM1040) (Silicibacter sp.), this protein is Large ribosomal subunit protein uL2.